Here is a 462-residue protein sequence, read N- to C-terminus: Argininosuccinate lyase (462 aa).

This sequence belongs to the lyase 1 family. Argininosuccinate lyase subfamily.

It localises to the cytoplasm. It catalyses the reaction 2-(N(omega)-L-arginino)succinate = fumarate + L-arginine. Its pathway is amino-acid biosynthesis; L-arginine biosynthesis; L-arginine from L-ornithine and carbamoyl phosphate: step 3/3. The chain is Argininosuccinate lyase from Pelagibacter ubique (strain HTCC1062).